Reading from the N-terminus, the 146-residue chain is Snaclec coagulation factor IX/factor X-binding protein subunit B (146 aa).

An N-terminal signal peptide occupies residues 1 to 23 (MGRFIFLSFGLLVVFLSLSGTGA). Intrachain disulfides connect Cys25-Cys36, Cys53-Cys142, and Cys119-Cys134. Residues 32-143 (YEGHCYKPFN…CRMEAYFVCE (112 aa)) form the C-type lectin domain. 2 residues coordinate Ca(2+): Ser64 and Glu70. Glu143 contacts Ca(2+).

The protein belongs to the snaclec family. As to quaternary structure, heterodimer with subunit A of IX/X-bp or IX-bp; disulfide-linked. Expressed by the venom gland.

It is found in the secreted. When linked to subunit A of IX/X-bp, anticoagulant protein which binds to the gamma-carboxyglutamic acid-domain regions of factors IX (F9) and factor X (F10) in the presence of calcium with a 1 to 1 stoichiometry. Its function is as follows. When linked to subunit A of IX-bp, anticoagulant protein which binds to the gamma-carboxyglutamic acid-domain regions of factor IX (but not to factor X) in the presence of calcium with a 1 to 1 stoichiometry. The polypeptide is Snaclec coagulation factor IX/factor X-binding protein subunit B (Gloydius halys (Chinese water mocassin)).